Reading from the N-terminus, the 336-residue chain is Holliday junction branch migration complex subunit RuvB (336 aa).

The tract at residues 1–181 (MDRIVEIEKF…FGMQFRLEFY (181 aa)) is large ATPase domain (RuvB-L). ATP-binding positions include Leu-20, Arg-21, Gly-62, Lys-65, Thr-66, Thr-67, 128–130 (EDF), Arg-171, Tyr-181, and Arg-218. Residue Thr-66 participates in Mg(2+) binding. The small ATPAse domain (RuvB-S) stretch occupies residues 182–252 (KNEELAIILE…RAKEALDSLG (71 aa)). A head domain (RuvB-H) region spans residues 255–336 (ELGFDAMDLR…KYNKGLFDEK (82 aa)). Positions 309 and 314 each coordinate DNA.

This sequence belongs to the RuvB family. As to quaternary structure, homohexamer. Forms an RuvA(8)-RuvB(12)-Holliday junction (HJ) complex. HJ DNA is sandwiched between 2 RuvA tetramers; dsDNA enters through RuvA and exits via RuvB. An RuvB hexamer assembles on each DNA strand where it exits the tetramer. Each RuvB hexamer is contacted by two RuvA subunits (via domain III) on 2 adjacent RuvB subunits; this complex drives branch migration. In the full resolvosome a probable DNA-RuvA(4)-RuvB(12)-RuvC(2) complex forms which resolves the HJ.

It localises to the cytoplasm. The enzyme catalyses ATP + H2O = ADP + phosphate + H(+). Functionally, the RuvA-RuvB-RuvC complex processes Holliday junction (HJ) DNA during genetic recombination and DNA repair, while the RuvA-RuvB complex plays an important role in the rescue of blocked DNA replication forks via replication fork reversal (RFR). RuvA specifically binds to HJ cruciform DNA, conferring on it an open structure. The RuvB hexamer acts as an ATP-dependent pump, pulling dsDNA into and through the RuvAB complex. RuvB forms 2 homohexamers on either side of HJ DNA bound by 1 or 2 RuvA tetramers; 4 subunits per hexamer contact DNA at a time. Coordinated motions by a converter formed by DNA-disengaged RuvB subunits stimulates ATP hydrolysis and nucleotide exchange. Immobilization of the converter enables RuvB to convert the ATP-contained energy into a lever motion, pulling 2 nucleotides of DNA out of the RuvA tetramer per ATP hydrolyzed, thus driving DNA branch migration. The RuvB motors rotate together with the DNA substrate, which together with the progressing nucleotide cycle form the mechanistic basis for DNA recombination by continuous HJ branch migration. Branch migration allows RuvC to scan DNA until it finds its consensus sequence, where it cleaves and resolves cruciform DNA. The polypeptide is Holliday junction branch migration complex subunit RuvB (Campylobacter lari (strain RM2100 / D67 / ATCC BAA-1060)).